Consider the following 137-residue polypeptide: 3-hydroxyacyl-[acyl-carrier-protein] dehydratase FabZ (137 aa).

His46 is a catalytic residue.

This sequence belongs to the thioester dehydratase family. FabZ subfamily.

It localises to the cytoplasm. The enzyme catalyses a (3R)-hydroxyacyl-[ACP] = a (2E)-enoyl-[ACP] + H2O. In terms of biological role, involved in unsaturated fatty acids biosynthesis. Catalyzes the dehydration of short chain beta-hydroxyacyl-ACPs and long chain saturated and unsaturated beta-hydroxyacyl-ACPs. The chain is 3-hydroxyacyl-[acyl-carrier-protein] dehydratase FabZ from Thermotoga neapolitana (strain ATCC 49049 / DSM 4359 / NBRC 107923 / NS-E).